The chain runs to 609 residues: Pair-rule protein odd-paired (609 aa).

Residues 20 to 41 (RMSPNTTASNSNAQQQQQQQLE) form a disordered region. The span at 22 to 32 (SPNTTASNSNA) shows a compositional bias: polar residues. The C2H2-type 1; atypical zinc finger occupies 210–249 (MQCLWIDPDQPGLVPPGGRKTCNKVFHSMHEIVTHLTVEH). 4 consecutive C2H2-type zinc fingers follow at residues 258-285 (HACF…IRVH), 291-315 (FACP…KRTH), 321-345 (FKCE…SHVH), and 351-375 (YNCR…MKVH). Disordered regions lie at residues 373–550 (KVHG…ASAS) and 583–609 (EAMN…ATAY). Polar residues predominate over residues 399 to 409 (IITGGAQTPPS). Low complexity-rich tracts occupy residues 414-434 (GSAG…IKSS) and 449-498 (HLGA…LTAH). Positions 528–537 (SHHHHPHHHQ) are enriched in basic residues. The segment covering 538 to 550 (AAPSPGAAAASAS) has biased composition (low complexity). Residues 591–601 (FGHHHHHHHLM) are compositionally biased toward basic residues.

Belongs to the GLI C2H2-type zinc-finger protein family. As to expression, expressed throughout all segment primordia; expressed ubiquitously in the ectoderm and mesoderm precursors.

The protein localises to the nucleus. Transcription factor essential for parasegmental subdivision of the embryo. It is involved in the activation of wingless (wg) in odd parasegments. It is also required for the timely activation of wg in the remaining parasegments and for the timely activation of engrailed (en) in all parasegments. This Drosophila melanogaster (Fruit fly) protein is Pair-rule protein odd-paired (opa).